Consider the following 282-residue polypeptide: Probable endonuclease 4 (282 aa).

Zn(2+)-binding residues include His-66, His-106, Glu-143, Asp-177, His-180, His-214, Asp-227, His-229, and Glu-259.

It belongs to the AP endonuclease 2 family. Zn(2+) serves as cofactor.

It catalyses the reaction Endonucleolytic cleavage to 5'-phosphooligonucleotide end-products.. In terms of biological role, endonuclease IV plays a role in DNA repair. It cleaves phosphodiester bonds at apurinic or apyrimidinic (AP) sites, generating a 3'-hydroxyl group and a 5'-terminal sugar phosphate. This Nitratidesulfovibrio vulgaris (strain ATCC 29579 / DSM 644 / CCUG 34227 / NCIMB 8303 / VKM B-1760 / Hildenborough) (Desulfovibrio vulgaris) protein is Probable endonuclease 4.